The following is a 478-amino-acid chain: Maintenance of telomere capping protein 1 (478 aa).

The tract at residues Met1–Asn153 is disordered. 2 stretches are compositionally biased toward basic and acidic residues: residues Thr77 to Pro87 and Ala95 to Glu124. The span at Lys125 to Glu141 shows a compositional bias: acidic residues. Ser273 bears the Phosphoserine mark. Basic and acidic residues-rich tracts occupy residues Gln321–Ser336 and Ser421–Glu435. 2 disordered regions span residues Gln321–Asn341 and Thr416–Pro448. Position 436 is a phosphoserine (Ser436). A compositionally biased stretch (acidic residues) spans Ser436–Asp447.

It belongs to the MTC1 family. As to quaternary structure, interacts with ribosomes.

It is found in the cytoplasm. The protein localises to the cytoplasmic vesicle. Its subcellular location is the COPI-coated vesicle. Involved in telomere capping. This is Maintenance of telomere capping protein 1 (MTC1) from Saccharomyces cerevisiae (strain ATCC 204508 / S288c) (Baker's yeast).